Consider the following 546-residue polypeptide: NAD(P)H-quinone oxidoreductase chain 4 (546 aa).

Helical transmembrane passes span 17–37, 48–68, 103–123, 127–147, 149–169, 181–201, 222–242, 256–276, 290–310, 327–347, 348–368, 389–409, 430–450, and 477–497; these read VPWL…VPFI, WYAL…YLNG, LILL…PVSF, LFYF…AVQD, LLFF…LAIW, FILY…AMGF, GFQL…LPIV, TAPV…YALL, FAPL…LTSF, MGFV…GAML, QMIS…ATYD, FALW…SGFV, VVIC…LLSM, and VYII…PRLM.

Belongs to the complex I subunit 4 family.

The protein localises to the cellular thylakoid membrane. The catalysed reaction is a plastoquinone + NADH + (n+1) H(+)(in) = a plastoquinol + NAD(+) + n H(+)(out). The enzyme catalyses a plastoquinone + NADPH + (n+1) H(+)(in) = a plastoquinol + NADP(+) + n H(+)(out). Its function is as follows. NDH-1 shuttles electrons from NAD(P)H, via FMN and iron-sulfur (Fe-S) centers, to quinones in the respiratory chain. The immediate electron acceptor for the enzyme in this species is believed to be plastoquinone. Couples the redox reaction to proton translocation (for every two electrons transferred, four hydrogen ions are translocated across the cytoplasmic membrane), and thus conserves the redox energy in a proton gradient. In Parasynechococcus marenigrum (strain WH8102), this protein is NAD(P)H-quinone oxidoreductase chain 4.